The chain runs to 334 residues: ADP-L-glycero-D-manno-heptose-6-epimerase (334 aa).

Residues 11–12 (FI), 32–33 (DN), lysine 39, lysine 54, 77–81 (QGACS), and asparagine 94 contribute to the NADP(+) site. Residue tyrosine 141 is the Proton acceptor of the active site. NADP(+) is bound at residue lysine 145. A substrate-binding site is contributed by asparagine 171. NADP(+) contacts are provided by valine 172 and lysine 180. Lysine 180 acts as the Proton acceptor in catalysis. Residues arginine 182, histidine 189, 203-206 (FGSN), arginine 216, and tyrosine 295 contribute to the substrate site.

Belongs to the NAD(P)-dependent epimerase/dehydratase family. HldD subfamily. Homopentamer. The cofactor is NADP(+).

It catalyses the reaction ADP-D-glycero-beta-D-manno-heptose = ADP-L-glycero-beta-D-manno-heptose. Its pathway is nucleotide-sugar biosynthesis; ADP-L-glycero-beta-D-manno-heptose biosynthesis; ADP-L-glycero-beta-D-manno-heptose from D-glycero-beta-D-manno-heptose 7-phosphate: step 4/4. In terms of biological role, catalyzes the interconversion between ADP-D-glycero-beta-D-manno-heptose and ADP-L-glycero-beta-D-manno-heptose via an epimerization at carbon 6 of the heptose. This chain is ADP-L-glycero-D-manno-heptose-6-epimerase, found in Neisseria meningitidis serogroup C / serotype 2a (strain ATCC 700532 / DSM 15464 / FAM18).